Consider the following 751-residue polypeptide: Catalase-peroxidase (751 aa).

Residues 1-24 (MADKCPFHNQAPKPNVAGSGTQNR) form a disordered region. A cross-link (tryptophyl-tyrosyl-methioninium (Trp-Tyr) (with M-267)) is located at residues 95–241 (WHSAGTYRTF…LAAAHMGLIY (147 aa)). The active-site Proton acceptor is the His-96. The segment at residues 241-267 (YVNPEGPDGNPDPVAAARDIRTTFARM) is a cross-link (tryptophyl-tyrosyl-methioninium (Tyr-Met) (with W-95)). His-282 is a heme b binding site.

This sequence belongs to the peroxidase family. Peroxidase/catalase subfamily. In terms of assembly, homodimer or homotetramer. The cofactor is heme b. Formation of the three residue Trp-Tyr-Met cross-link is important for the catalase, but not the peroxidase activity of the enzyme.

It localises to the cytoplasm. It catalyses the reaction H2O2 + AH2 = A + 2 H2O. The catalysed reaction is 2 H2O2 = O2 + 2 H2O. Functionally, bifunctional enzyme with both catalase and broad-spectrum peroxidase activity. The polypeptide is Catalase-peroxidase (Aspergillus oryzae (strain ATCC 42149 / RIB 40) (Yellow koji mold)).